The chain runs to 132 residues: Small ribosomal subunit protein uS8 (132 aa).

The protein belongs to the universal ribosomal protein uS8 family. In terms of assembly, part of the 30S ribosomal subunit. Contacts proteins S5 and S12.

Functionally, one of the primary rRNA binding proteins, it binds directly to 16S rRNA central domain where it helps coordinate assembly of the platform of the 30S subunit. The sequence is that of Small ribosomal subunit protein uS8 from Alkaliphilus oremlandii (strain OhILAs) (Clostridium oremlandii (strain OhILAs)).